We begin with the raw amino-acid sequence, 171 residues long: MANPRNEAALAELKARFAETDTVVLTEYRGLTVAQTTELRKALGFDVQYSVAKNTLVKIAANEAGIEGLDDLLTGPTAVAFIKGEAVDTAKVLKKFGEENKAFVVKGGYMDGNALTAEQVNAIAELDNRETTLAKLAGAMKGSLAKAAGLFNAPASQVARLAVALQDKKDA.

It belongs to the universal ribosomal protein uL10 family. In terms of assembly, part of the ribosomal stalk of the 50S ribosomal subunit. The N-terminus interacts with L11 and the large rRNA to form the base of the stalk. The C-terminus forms an elongated spine to which L12 dimers bind in a sequential fashion forming a multimeric L10(L12)X complex.

In terms of biological role, forms part of the ribosomal stalk, playing a central role in the interaction of the ribosome with GTP-bound translation factors. The sequence is that of Large ribosomal subunit protein uL10 from Corynebacterium glutamicum (strain R).